Consider the following 355-residue polypeptide: tRNA-specific 2-thiouridylase MnmA (355 aa).

ATP contacts are provided by residues 8-15 (GMSGGVDS) and Met34. Cys103 functions as the Nucleophile in the catalytic mechanism. Cys103 and Cys199 are disulfide-bonded. Gly127 contributes to the ATP binding site. Residues 149–151 (KDQ) form an interaction with tRNA region. Cys199 functions as the Cysteine persulfide intermediate in the catalytic mechanism. The interval 305–306 (RY) is interaction with tRNA.

Belongs to the MnmA/TRMU family.

It localises to the cytoplasm. The catalysed reaction is S-sulfanyl-L-cysteinyl-[protein] + uridine(34) in tRNA + AH2 + ATP = 2-thiouridine(34) in tRNA + L-cysteinyl-[protein] + A + AMP + diphosphate + H(+). Its function is as follows. Catalyzes the 2-thiolation of uridine at the wobble position (U34) of tRNA, leading to the formation of s(2)U34. The chain is tRNA-specific 2-thiouridylase MnmA from Clostridium acetobutylicum (strain ATCC 824 / DSM 792 / JCM 1419 / IAM 19013 / LMG 5710 / NBRC 13948 / NRRL B-527 / VKM B-1787 / 2291 / W).